A 305-amino-acid chain; its full sequence is Acetylglutamate kinase (305 aa).

Substrate contacts are provided by residues 67–68, Arg89, and Asn190; that span reads GG.

It belongs to the acetylglutamate kinase family. ArgB subfamily.

Its subcellular location is the cytoplasm. The catalysed reaction is N-acetyl-L-glutamate + ATP = N-acetyl-L-glutamyl 5-phosphate + ADP. It participates in amino-acid biosynthesis; L-arginine biosynthesis; N(2)-acetyl-L-ornithine from L-glutamate: step 2/4. In terms of biological role, catalyzes the ATP-dependent phosphorylation of N-acetyl-L-glutamate. The sequence is that of Acetylglutamate kinase from Bifidobacterium longum subsp. infantis (strain ATCC 15697 / DSM 20088 / JCM 1222 / NCTC 11817 / S12).